A 317-amino-acid chain; its full sequence is Melanocyte-stimulating hormone receptor (317 aa).

Over 1 to 37 (MPMQGAQRRLLGSLNSIPTATPNLGLAANHTGAPCLE) the chain is Extracellular. Asn-29 is a glycosylation site (N-linked (GlcNAc...) asparagine). Residues 38 to 63 (VSIPDWLFLSLGLVSLVQNVLVVAAI) traverse the membrane as a helical segment. The Cytoplasmic portion of the chain corresponds to 64-72 (AKNRNLHSP). A helical transmembrane segment spans residues 73–93 (MYCFICCLALSDLLVSGSNML). Over 94–118 (ETAVILMLEAGALATRASVVQQLQN) the chain is Extracellular. A helical membrane pass occupies residues 119-140 (TIDVLTCSSMLCSLCFLGAIAL). The Cytoplasmic segment spans residues 141-163 (DRYVSIFYALRYHSIVTLPRARR). The chain crosses the membrane as a helical span at residues 164–183 (AIAATWVASVLSSTLFIAYC). Topologically, residues 184–191 (DHAAVLLC) are extracellular. Residues 192 to 211 (LVVFFLAMLVLMAVLYVHML) form a helical membrane-spanning segment. Residues 212–240 (ARACQHAQGITRLHKRQLPAHQGFGLRGA) lie on the Cytoplasmic side of the membrane. Residues 241–266 (ATLTILLGIFFLCWGPFFLHLMLVVL) traverse the membrane as a helical segment. The Extracellular portion of the chain corresponds to 267-279 (CPQHLTCSCIFKN). A helical membrane pass occupies residues 280 to 300 (FKVFLTLIICNTIIDPLIYAF). Topologically, residues 301–317 (RSQELCRTLKEVLLCSW) are cytoplasmic. A lipid anchor (S-palmitoyl cysteine) is attached at Cys-315.

The protein belongs to the G-protein coupled receptor 1 family. As to quaternary structure, interacts with MGRN1, but does not undergo MGRN1-mediated ubiquitination; this interaction competes with GNAS-binding and thus inhibits agonist-induced cAMP production. Interacts with OPN3; the interaction results in a decrease in MC1R-mediated cAMP signaling and ultimately a decrease in melanin production in melanocytes.

The protein resides in the cell membrane. In terms of biological role, receptor for MSH (alpha, beta and gamma) and ACTH. The activity of this receptor is mediated by G proteins which activate adenylate cyclase. Mediates melanogenesis, the production of eumelanin (black/brown) and phaeomelanin (red/yellow), via regulation of cAMP signaling in melanocytes. The protein is Melanocyte-stimulating hormone receptor (MC1R) of Alouatta seniculus (Red howler monkey).